A 576-amino-acid chain; its full sequence is Lysine--tRNA ligase (576 aa).

Positions 412 and 419 each coordinate Mg(2+).

Belongs to the class-II aminoacyl-tRNA synthetase family. As to quaternary structure, homodimer. Mg(2+) is required as a cofactor.

It is found in the cytoplasm. It catalyses the reaction tRNA(Lys) + L-lysine + ATP = L-lysyl-tRNA(Lys) + AMP + diphosphate. The chain is Lysine--tRNA ligase from Phocaeicola vulgatus (strain ATCC 8482 / DSM 1447 / JCM 5826 / CCUG 4940 / NBRC 14291 / NCTC 11154) (Bacteroides vulgatus).